The following is a 270-amino-acid chain: MRTIRHKAYKSLGQNFILDPSMAEKIVSYAGSIEGYNIIEVGPGFGTMTEIILRSKVASLLAIEKDRRLSPMHKGLMQKYPNYRYIEHDVLEINLETMISAPSKMIANLPYNISVILLLRMLKYIHNFEKLTLMFQKEVAERLVAKPGTKSYSILSVLVQLLCDVEKVKDLQPGAFSPPPKVCSSVVNITPLGNLRFPVDYSYMLKMLKKAFGCKRKTVRNALGLPHQEFDALLAECRIPPSVRAENLSVEQLCAVSNFLQSRQYQFSTG.

N15, I17, G42, E64, D89, and N108 together coordinate S-adenosyl-L-methionine.

The protein belongs to the class I-like SAM-binding methyltransferase superfamily. rRNA adenine N(6)-methyltransferase family. RsmA subfamily.

Its subcellular location is the cytoplasm. It carries out the reaction adenosine(1518)/adenosine(1519) in 16S rRNA + 4 S-adenosyl-L-methionine = N(6)-dimethyladenosine(1518)/N(6)-dimethyladenosine(1519) in 16S rRNA + 4 S-adenosyl-L-homocysteine + 4 H(+). Functionally, specifically dimethylates two adjacent adenosines (A1518 and A1519) in the loop of a conserved hairpin near the 3'-end of 16S rRNA in the 30S particle. May play a critical role in biogenesis of 30S subunits. The protein is Ribosomal RNA small subunit methyltransferase A of Anaplasma marginale (strain Florida).